A 138-amino-acid chain; its full sequence is uncharacterized protein (138 aa).

Helical transmembrane passes span 1 to 21 (MEIGYIFILAGFLVIALEAIV) and 46 to 66 (YAFISAIIAGVLTIIILHKFV).

It localises to the cell membrane. This is an uncharacterized protein from Methanocaldococcus jannaschii (strain ATCC 43067 / DSM 2661 / JAL-1 / JCM 10045 / NBRC 100440) (Methanococcus jannaschii).